A 1040-amino-acid polypeptide reads, in one-letter code: Multidrug resistance protein MdtB (1040 aa).

Transmembrane regions (helical) follow at residues 16–36 (FIMR…AGII), 347–367 (LMMA…NIPA), 369–389 (IIPG…MVFL), 396–416 (LTLM…IVVI), 440–460 (IGFT…PLLF), 472–492 (FAIT…TLTP), 537–557 (WLTL…WVFI), 863–883 (LGST…VLGI), 888–908 (FIHP…ALLA), 911–931 (IAGS…IGIV), 968–988 (ILMT…STGV), and 998–1018 (IGMV…TPVI).

This sequence belongs to the resistance-nodulation-cell division (RND) (TC 2.A.6) family. MdtB subfamily. In terms of assembly, part of a tripartite efflux system composed of MdtA, MdtB and MdtC. MdtB forms a heteromultimer with MdtC.

The protein localises to the cell inner membrane. Functionally, the MdtABC tripartite complex confers resistance against novobiocin and deoxycholate. This is Multidrug resistance protein MdtB from Escherichia coli O8 (strain IAI1).